The sequence spans 171 residues: Putative auxin-responsive protein IAA29 (171 aa).

Positions 19–114 (SRFVKVFMHG…TVKKIYIVPA (96 aa)) constitute a PB1 domain. Positions 117-171 (QNENDYQEEEEDNAAAAATADEDGDGAAADDGVAAAADDVDDVAGYTSNDDPSFD) are disordered. Positions 142–153 (GAAADDGVAAAA) are enriched in low complexity. The span at 162–171 (YTSNDDPSFD) shows a compositional bias: polar residues.

It belongs to the Aux/IAA family. As to quaternary structure, homodimers and heterodimers.

It is found in the nucleus. In terms of biological role, aux/IAA proteins are short-lived transcriptional factors that function as repressors of early auxin response genes at low auxin concentrations. This Oryza sativa subsp. japonica (Rice) protein is Putative auxin-responsive protein IAA29 (IAA29).